A 380-amino-acid chain; its full sequence is Hydrogenase maturation factor HypD1 (380 aa).

Fe cation-binding residues include Cys36, Cys64, and Cys67.

This sequence belongs to the HypD family. [4Fe-4S] cluster is required as a cofactor.

The protein operates within protein modification; [NiFe] hydrogenase maturation. Involved in the maturation of [NiFe] hydrogenases. Involved in the biosynthesis of the Fe(CN)(2)CO cofactor. This is Hydrogenase maturation factor HypD1 (hypD1) from Bradyrhizobium diazoefficiens (strain JCM 10833 / BCRC 13528 / IAM 13628 / NBRC 14792 / USDA 110).